The sequence spans 359 residues: Aflatoxin B1 aldehyde reductase member 2 (359 aa).

The N-terminal 38 residues, 1-38 (MLSAASRVVSRAAVHCALRSPPPEARALAMSRPPPPRV), are a transit peptide targeting the mitochondrion. The residue at position 40 (Ser40) is a Phosphoserine. Asp72 serves as a coordination point for NADP(+). The Proton donor role is filled by Tyr77. An N6-acetyllysine modification is found at Lys128. His141 contacts substrate. NADP(+) is bound by residues 171–172 (SN), Gln197, 226–236 (NPLAGGLLTGK), and Arg250. Position 236 is an N6-succinyllysine (Lys236). Ser255 bears the Phosphoserine mark. Substrate is bound by residues Tyr260 and Arg263. 318–326 (SSLEQLEQN) provides a ligand contact to NADP(+). Residue Arg359 participates in substrate binding.

Belongs to the aldo/keto reductase family. Aldo/keto reductase 2 subfamily. As to quaternary structure, homodimer. As to expression, detected in brain, liver, small intestine and testis, and at lower levels in heart, prostate, skeletal muscle and spleen. Detected in kidney proximal and distal tubules, endothelial cells lining the Bowman's capsules and some cysts. Detected at low levels in lung and pancreas (at protein level). Widely expressed.

Its subcellular location is the mitochondrion. It is found in the golgi apparatus. The protein resides in the cytoplasm. It catalyses the reaction 4-hydroxybutanoate + NADP(+) = succinate semialdehyde + NADPH + H(+). Its function is as follows. Catalyzes the NADPH-dependent reduction of succinic semialdehyde to gamma-hydroxybutyrate. May have an important role in producing the neuromodulator gamma-hydroxybutyrate (GHB). Has broad substrate specificity. Has NADPH-dependent aldehyde reductase activity towards 2-carboxybenzaldehyde, 2-nitrobenzaldehyde and pyridine-2-aldehyde (in vitro). Can reduce 1,2-naphthoquinone and 9,10-phenanthrenequinone (in vitro). Can reduce the dialdehyde protein-binding form of aflatoxin B1 (AFB1) to the non-binding AFB1 dialcohol. May be involved in protection of liver against the toxic and carcinogenic effects of AFB1, a potent hepatocarcinogen. This is Aflatoxin B1 aldehyde reductase member 2 (AKR7A2) from Homo sapiens (Human).